Consider the following 148-residue polypeptide: MFEGAAALNLDAKGRLAIPARHRDALLAASEGSLVLTAHPHRCLLLYPSPAWQPIRDQILKASSLDPRAASIKRVLVGNARTEEPDSAGRILIAPELREYAKFEKTVYLVGMGTHFEIWSEAGWKQQNDLAAEALSGDLPPGFGDLVL.

SpoVT-AbrB domains lie at 5–51 (AAAL…PSPA) and 80–123 (ARTE…SEAG).

This sequence belongs to the MraZ family. In terms of assembly, forms oligomers.

The protein resides in the cytoplasm. Its subcellular location is the nucleoid. In Dechloromonas aromatica (strain RCB), this protein is Transcriptional regulator MraZ.